The primary structure comprises 450 residues: tRNA-2-methylthio-N(6)-dimethylallyladenosine synthase (450 aa).

In terms of domain architecture, MTTase N-terminal spans 2–119 (KKVFVKTYGC…LPDLIARRQR (118 aa)). The [4Fe-4S] cluster site is built by cysteine 11, cysteine 48, cysteine 82, cysteine 156, cysteine 160, and cysteine 163. A Radical SAM core domain is found at 142-375 (RVEGPSAFVS…QATIEENVQR (234 aa)). The TRAM domain maps to 378–448 (QNMVGTVQRI…PHSLRGEIVV (71 aa)).

Belongs to the methylthiotransferase family. MiaB subfamily. As to quaternary structure, monomer. The cofactor is [4Fe-4S] cluster.

It is found in the cytoplasm. It carries out the reaction N(6)-dimethylallyladenosine(37) in tRNA + (sulfur carrier)-SH + AH2 + 2 S-adenosyl-L-methionine = 2-methylsulfanyl-N(6)-dimethylallyladenosine(37) in tRNA + (sulfur carrier)-H + 5'-deoxyadenosine + L-methionine + A + S-adenosyl-L-homocysteine + 2 H(+). Catalyzes the methylthiolation of N6-(dimethylallyl)adenosine (i(6)A), leading to the formation of 2-methylthio-N6-(dimethylallyl)adenosine (ms(2)i(6)A) at position 37 in tRNAs that read codons beginning with uridine. This Cupriavidus necator (strain ATCC 17699 / DSM 428 / KCTC 22496 / NCIMB 10442 / H16 / Stanier 337) (Ralstonia eutropha) protein is tRNA-2-methylthio-N(6)-dimethylallyladenosine synthase.